Consider the following 389-residue polypeptide: Glutaryl-CoA dehydrogenase (389 aa).

Residues R87 and N91 each coordinate substrate. FAD contacts are provided by residues F126–T129, S135, and W159–S161. S135 contacts substrate. Position 181 (S181) interacts with substrate. FAD contacts are provided by residues R271, F281–N284, R340, A344, and E367–N371. The active-site Proton acceptor is E367. A substrate-binding site is contributed by R385.

Belongs to the acyl-CoA dehydrogenase family. As to quaternary structure, homotetramer. It depends on FAD as a cofactor.

The enzyme catalyses glutaryl-CoA + A = (2E)-glutaconyl-CoA + AH2. It participates in aromatic compound metabolism; benzoyl-CoA degradation. Its activity is regulated as follows. Inhibited by glutaconyl-CoA. Its function is as follows. Catalyzes the dehydrogenation of Glutaryl-CoA to glutaconyl-CoA. This is Glutaryl-CoA dehydrogenase (Acd) from Desulfococcus multivorans.